Reading from the N-terminus, the 230-residue chain is Cytidylate kinase (230 aa).

An ATP-binding site is contributed by 12–20 (GPSGAGKGT).

Belongs to the cytidylate kinase family. Type 1 subfamily.

Its subcellular location is the cytoplasm. The catalysed reaction is CMP + ATP = CDP + ADP. The enzyme catalyses dCMP + ATP = dCDP + ADP. This chain is Cytidylate kinase, found in Yersinia enterocolitica serotype O:8 / biotype 1B (strain NCTC 13174 / 8081).